Here is a 512-residue protein sequence, read N- to C-terminus: Histidine ammonia-lyase (512 aa).

Residues 143–145 (ASG) constitute a cross-link (5-imidazolinone (Ala-Gly)). A 2,3-didehydroalanine (Ser) modification is found at Ser-144.

This sequence belongs to the PAL/histidase family. In terms of processing, contains an active site 4-methylidene-imidazol-5-one (MIO), which is formed autocatalytically by cyclization and dehydration of residues Ala-Ser-Gly.

The protein localises to the cytoplasm. The enzyme catalyses L-histidine = trans-urocanate + NH4(+). It functions in the pathway amino-acid degradation; L-histidine degradation into L-glutamate; N-formimidoyl-L-glutamate from L-histidine: step 1/3. This chain is Histidine ammonia-lyase, found in Ruegeria pomeroyi (strain ATCC 700808 / DSM 15171 / DSS-3) (Silicibacter pomeroyi).